Consider the following 619-residue polypeptide: Xyloglucan galactosyltransferase MUR3 (619 aa).

The tract at residues 1-26 (MFPRVSMRRRSAEVSPTEPMEKGNGK) is disordered. Topologically, residues 1-33 (MFPRVSMRRRSAEVSPTEPMEKGNGKNQTNRIC) are cytoplasmic. A helical; Signal-anchor for type II membrane protein membrane pass occupies residues 34-54 (LLVALSLFFWALLLYFHFVVL). Topologically, residues 55-619 (GTSNIDKQLQ…WKSEQRDKTQ (565 aa)) are lumenal. N-linked (GlcNAc...) asparagine glycosylation is found at Asn-116, Asn-146, Asn-231, Asn-257, Asn-319, Asn-465, and Asn-482. Residues 576 to 619 (HVWDPFFSKPKPGEDGSSDGNGGTTISADAAKNSWKSEQRDKTQ) are disordered. A compositionally biased stretch (basic and acidic residues) spans 610-619 (WKSEQRDKTQ).

Belongs to the glycosyltransferase 47 family. Interacts with CSLC4 and FUT1. As to expression, ubiquitous.

Its subcellular location is the golgi apparatus. It is found in the golgi stack membrane. The protein localises to the golgi apparatus membrane. Its function is as follows. Involved in the attachment of the Gal residue on the third xylosyl unit within the XXXG core structure of xyloglucan, the principal glycan that interlaces the cellulose microfibrils in plant cell wall. Associates with other xyloglucan-synthesizing enzymes to form multiprotein complexes for xyloglucan synthesis in the Golgi. Interacts with actin and is required for the proper endomembrane organization and for the cell elongation. Not involved in the trafficking from the endoplasmic reticulum to the vacuoles. Involved in salt stress tolerance. Participates in the control of the expression of genes encoding for proteins involved in reactive oxygen species (ROS) detoxification under salt stress. May contribute to the maintenance of the proper organization of actin microfilaments during salt stress-induced ROS production. The sequence is that of Xyloglucan galactosyltransferase MUR3 from Arabidopsis thaliana (Mouse-ear cress).